The primary structure comprises 282 residues: Trihydroxynaphthalene reductase PfmaI (282 aa).

The NADP(+) site is built by Ile-41, Asn-114, and Arg-147. Active-site proton donor residues include Ser-164 and Tyr-178. Positions 178, 182, 211, and 213 each coordinate NADP(+). The Lowers pKa of active site Tyr role is filled by Lys-182.

It belongs to the short-chain dehydrogenases/reductases (SDR) family.

It functions in the pathway pigment biosynthesis; melanin biosynthesis. In terms of biological role, trihydroxynaphthalene reductase involved the biosynthesis of dihydroxynaphthalene (DHN)-melanin, a bluish-green pigment forming a dark layer in the conidial wall that protects the conidia from UV radiations. The first step of the pathway is the production of the pentaketide 1,3,6,8-tetrahydroxynaphthalene (1,3,6,8-THN or T4HN) by the polyketide synthase PfmaE though condensation of acetyl-CoA with malonyl-CoA. T4HN is not stable and easily oxidizes into the stable form flaviolin. T4HN is also substrate of the hydroxynaphthalene reductase PfmaG to yield scytalone. The scytalone dehydratase PfmaJ then reduces scytalone to 1,3,8-THN. 1,3,8-THN is then substrate of the hydroxynaphthalene reductase PfmaI to yield vermelone. Vermelone is further converted by the multicopper oxidase PfmaD to 1,8-DHN. Finally the laccase PFICI_06862 transforms 1,8-DHN to DHN-melanin. The roles of the 5-oxoprolinase PfmaA and the proline iminopeptidase PfmaB within the cluster have not been elucidated yet. In Pestalotiopsis fici (strain W106-1 / CGMCC3.15140), this protein is Trihydroxynaphthalene reductase PfmaI.